A 637-amino-acid chain; its full sequence is Transcription termination factor FttA (637 aa).

Positions 4–71 (EDVLLDLKHK…IAMRPDPRVL (68 aa)) are KHa. The tract at residues 72 to 139 (ATPEDSISII…WIPKVVRTPP (68 aa)) is KHb. The metallo-beta-lactamase N-terminus stretch occupies residues 180-383 (WVRVTALGGC…VISEATYGNA (204 aa)). Zn(2+) is bound by residues His-242, His-244, Asp-246, His-247, His-329, and Asp-352. A beta-Casp region spans residues 384-578 (NAFQPALKDA…MEVQVVDGFS (195 aa)). Residues 579–637 (GHSDRRQLMEYVKRMQPRPERVFTEHGDEKACVDLASSVYKKLKIETRALTNLETVRLL) are metallo-beta-lactamase C-terminus. His-604 provides a ligand contact to Zn(2+).

This sequence belongs to the metallo-beta-lactamase superfamily. RNA-metabolizing metallo-beta-lactamase-like family. FttA subfamily. As to quaternary structure, homodimer. Interacts with RNA polymerase (RNAP), interacts with the Spt4-Spt5 complex. The cofactor is Zn(2+).

Its function is as follows. Terminates transcription on the whole genome. Termination is linked to FttA-mediated RNA cleavage and does not require NTP hydrolysis. Cleaves endonucleolytically at the RNA exit channel of RNA polymerase (RNAP); the 5'-3' exonuclease activity of this protein degrades the nascent RNA released from RNAP. This Methanosarcina mazei (strain ATCC BAA-159 / DSM 3647 / Goe1 / Go1 / JCM 11833 / OCM 88) (Methanosarcina frisia) protein is Transcription termination factor FttA.